Here is a 74-residue protein sequence, read N- to C-terminus: Translation initiation factor IF-1 (74 aa).

One can recognise an S1-like domain in the interval 1–72 (MGKEDVIRME…TRGRIVYRKK (72 aa)).

The protein belongs to the IF-1 family. Component of the 30S ribosomal translation pre-initiation complex which assembles on the 30S ribosome in the order IF-2 and IF-3, IF-1 and N-formylmethionyl-tRNA(fMet); mRNA recruitment can occur at any time during PIC assembly.

It localises to the cytoplasm. Functionally, one of the essential components for the initiation of protein synthesis. Stabilizes the binding of IF-2 and IF-3 on the 30S subunit to which N-formylmethionyl-tRNA(fMet) subsequently binds. Helps modulate mRNA selection, yielding the 30S pre-initiation complex (PIC). Upon addition of the 50S ribosomal subunit IF-1, IF-2 and IF-3 are released leaving the mature 70S translation initiation complex. The protein is Translation initiation factor IF-1 of Thermotoga maritima (strain ATCC 43589 / DSM 3109 / JCM 10099 / NBRC 100826 / MSB8).